Here is a 162-residue protein sequence, read N- to C-terminus: MDFRIGQGYDVHQLVPGRPLIIGGVTIPYERGLLGHSDADVLLHAITDALFGAAALGDIGRHFSDTDPRFKGADSRALLRECASRVAQAGFAIRNVDSTIIAQAPKLAPHIDAMRANIAADLDLPLDRVNVKAKTNEKLGYLGRGEGIEAQAAALVVREAAA.

2 residues coordinate a divalent metal cation: Asp10 and His12. 4-CDP-2-C-methyl-D-erythritol 2-phosphate is bound by residues 10-12 and 36-37; these read DVH and HS. Residue His44 coordinates a divalent metal cation. 4-CDP-2-C-methyl-D-erythritol 2-phosphate is bound by residues 58–60, 63–67, and Arg144; these read DIG and FSDTD.

It belongs to the IspF family. As to quaternary structure, homotrimer. A divalent metal cation is required as a cofactor.

It carries out the reaction 4-CDP-2-C-methyl-D-erythritol 2-phosphate = 2-C-methyl-D-erythritol 2,4-cyclic diphosphate + CMP. It functions in the pathway isoprenoid biosynthesis; isopentenyl diphosphate biosynthesis via DXP pathway; isopentenyl diphosphate from 1-deoxy-D-xylulose 5-phosphate: step 4/6. Functionally, involved in the biosynthesis of isopentenyl diphosphate (IPP) and dimethylallyl diphosphate (DMAPP), two major building blocks of isoprenoid compounds. Catalyzes the conversion of 4-diphosphocytidyl-2-C-methyl-D-erythritol 2-phosphate (CDP-ME2P) to 2-C-methyl-D-erythritol 2,4-cyclodiphosphate (ME-CPP) with a corresponding release of cytidine 5-monophosphate (CMP). The sequence is that of 2-C-methyl-D-erythritol 2,4-cyclodiphosphate synthase from Burkholderia mallei (strain NCTC 10247).